A 456-amino-acid polypeptide reads, in one-letter code: Sulfate adenylyltransferase (456 aa).

It belongs to the sulfate adenylyltransferase family.

It carries out the reaction sulfate + ATP + H(+) = adenosine 5'-phosphosulfate + diphosphate. Its pathway is sulfur metabolism; hydrogen sulfide biosynthesis; sulfite from sulfate: step 1/3. In Archaeoglobus fulgidus (strain ATCC 49558 / DSM 4304 / JCM 9628 / NBRC 100126 / VC-16), this protein is Sulfate adenylyltransferase (sat).